We begin with the raw amino-acid sequence, 162 residues long: Cyclic pyranopterin monophosphate synthase (162 aa).

Residues 79-81 (LCH) and 117-118 (ME) each bind substrate. Aspartate 132 is a catalytic residue.

The protein belongs to the MoaC family. As to quaternary structure, homohexamer; trimer of dimers.

It catalyses the reaction (8S)-3',8-cyclo-7,8-dihydroguanosine 5'-triphosphate = cyclic pyranopterin phosphate + diphosphate. It participates in cofactor biosynthesis; molybdopterin biosynthesis. Catalyzes the conversion of (8S)-3',8-cyclo-7,8-dihydroguanosine 5'-triphosphate to cyclic pyranopterin monophosphate (cPMP). The sequence is that of Cyclic pyranopterin monophosphate synthase from Bordetella avium (strain 197N).